We begin with the raw amino-acid sequence, 72 residues long: Cytotoxin 9 (72 aa).

The N-terminal stretch at 1–12 is a signal peptide; that stretch reads VVTIVCLDLGYT. 4 disulfide bridges follow: Cys15–Cys33, Cys26–Cys50, Cys54–Cys65, and Cys66–Cys71.

This sequence belongs to the three-finger toxin family. Short-chain subfamily. Type IA cytotoxin sub-subfamily. As to quaternary structure, monomer in solution; Homodimer and oligomer in the presence of negatively charged lipids forming a pore with a size ranging between 20 and 30 Angstroms. Expressed by the venom gland.

It is found in the secreted. In terms of biological role, shows cytolytic activity on many different cells by forming a pore in lipid membranes. In vivo, increases heart rate or kills the animal by cardiac arrest. In addition, it binds to heparin with high affinity, interacts with Kv channel-interacting protein 1 (KCNIP1) in a calcium-independent manner, and binds to integrin alpha-V/beta-3 (ITGAV/ITGB3) with moderate affinity. Preferentially binds acidic phospholipids like phosphatidylserine, phosphatidic acid and phosphatidyl glycerol. Has hemolytic activity towards human erythrocytes (EC(50)=0.171 uM) and cytolytic activity towards various cell lines. The protein is Cytotoxin 9 of Naja naja (Indian cobra).